The following is a 131-amino-acid chain: Ribosome-binding factor A (131 aa).

Belongs to the RbfA family. As to quaternary structure, monomer. Binds 30S ribosomal subunits, but not 50S ribosomal subunits or 70S ribosomes.

It localises to the cytoplasm. Functionally, one of several proteins that assist in the late maturation steps of the functional core of the 30S ribosomal subunit. Associates with free 30S ribosomal subunits (but not with 30S subunits that are part of 70S ribosomes or polysomes). Required for efficient processing of 16S rRNA. May interact with the 5'-terminal helix region of 16S rRNA. This is Ribosome-binding factor A from Ruegeria sp. (strain TM1040) (Silicibacter sp.).